The following is a 276-amino-acid chain: Transmembrane protein 81 (276 aa).

Positions 1–24 (MKTSATSFIPGSLVLAFCLPVVAT) are cleaved as a signal peptide. The Extracellular portion of the chain corresponds to 25–225 (SPKTLAIPEK…QHPPWKKKVA (201 aa)). N-linked (GlcNAc...) asparagine glycosylation occurs at N45. An Ig-like domain is found at 83–176 (TNWLCGMLHF…NLRLVKRLYF (94 aa)). C104 and C160 are oxidised to a cystine. A glycan (N-linked (GlcNAc...) asparagine) is linked at N211. A helical transmembrane segment spans residues 226–246 (IAVGIGVAGGVTGGVLVSIVL). Topologically, residues 247 to 276 (CGRLSVIHSSASLETLQALLPKGGMLRKPD) are cytoplasmic.

Forms a complex with IZUMO1 and SPACA6 on spermatocyte cell membrane required for fertilization.

Its subcellular location is the cell membrane. Its function is as follows. Essential fertilization factor required for male fertility. Part of a conserved trimeric sperm complex with the essential fertilization factors IZUMO1 and SPACA6 which bridges sperm and oocyte membranes during fertilization by binding to IZUMO1R/JUNO on the oocyte. The chain is Transmembrane protein 81 (TMEM81) from Bos taurus (Bovine).